Here is a 228-residue protein sequence, read N- to C-terminus: UPF0173 metal-dependent hydrolase Lm4b_01588 (228 aa).

It belongs to the UPF0173 family.

The chain is UPF0173 metal-dependent hydrolase Lm4b_01588 from Listeria monocytogenes serotype 4b (strain CLIP80459).